The chain runs to 549 residues: Glucose-6-phosphate isomerase (549 aa).

The active-site Proton donor is E355. Active-site residues include H386 and K514.

The protein belongs to the GPI family.

Its subcellular location is the cytoplasm. It carries out the reaction alpha-D-glucose 6-phosphate = beta-D-fructose 6-phosphate. It functions in the pathway carbohydrate biosynthesis; gluconeogenesis. It participates in carbohydrate degradation; glycolysis; D-glyceraldehyde 3-phosphate and glycerone phosphate from D-glucose: step 2/4. Catalyzes the reversible isomerization of glucose-6-phosphate to fructose-6-phosphate. The chain is Glucose-6-phosphate isomerase from Salmonella typhi.